The primary structure comprises 287 residues: Acetylglutamate kinase (287 aa).

Substrate is bound by residues 64–65 (GG), Arg86, and Asn185.

Belongs to the acetylglutamate kinase family. ArgB subfamily.

The protein resides in the cytoplasm. The catalysed reaction is N-acetyl-L-glutamate + ATP = N-acetyl-L-glutamyl 5-phosphate + ADP. It functions in the pathway amino-acid biosynthesis; L-arginine biosynthesis; N(2)-acetyl-L-ornithine from L-glutamate: step 2/4. Catalyzes the ATP-dependent phosphorylation of N-acetyl-L-glutamate. This chain is Acetylglutamate kinase, found in Hydrogenobaculum sp. (strain Y04AAS1).